Here is a 679-residue protein sequence, read N- to C-terminus: Mitotic interactor and substrate of PLK1 (679 aa).

Serine 78 is subject to Phosphoserine; by CDK1; in vitro. Disordered stretches follow at residues 151–182 (AVRK…TPLE) and 206–245 (ANKG…GHVV). Polar residues predominate over residues 153 to 163 (RKSSTVATLQG). A Phosphoserine modification is found at serine 156. Threonine 164 and threonine 172 each carry phosphothreonine; by CDK1; in vitro. Threonine 179 carries the phosphothreonine modification. Serine 214 is modified (phosphoserine; by CDK1; in vitro). Threonine 219 bears the Phosphothreonine mark. Threonine 224 bears the Phosphothreonine; by CDK1; in vitro mark. Residue serine 284 is modified to Phosphoserine; by CDK1; in vitro. Residue threonine 287 is modified to Phosphothreonine; by CDK1; in vitro. Position 348 is a phosphoserine (serine 348). Residues 360–371 (QREEDHRREGLH) are compositionally biased toward basic and acidic residues. The disordered stretch occupies residues 360 to 419 (QREEDHRREGLHVGRASTPDWVSEGPQPGLRRALSSDSILSPAPDARAADPAPEVRKVNR). Phosphothreonine; by CDK1; in vitro is present on threonine 377. Position 382 is a phosphoserine; by CDK1; in vitro (serine 382). A phosphoserine; by PLK1; in vitro mark is found at serine 394, serine 395, and serine 397. Serine 400 is modified (phosphoserine). Residues 401-411 (PAPDARAADPA) show a composition bias toward low complexity. Serine 430 carries the phosphoserine modification. The tract at residues 447 to 494 (PSSLSTAEAKAATSPKATMSPRHLSESSGKPLSTKQEASKPPRGCPQA) is disordered. Position 471 is a phosphoserine; by PLK1; in vitro (serine 471). The span at 472-482 (ESSGKPLSTKQ) shows a compositional bias: polar residues. Residues serine 541 and serine 543 each carry the phosphoserine modification. The stretch at 545-569 (DLLERERESVLRREQEVAEERRNAL) forms a coiled coil. Over residues 557–567 (REQEVAEERRN) the composition is skewed to basic and acidic residues. Disordered regions lie at residues 557 to 598 (REQE…ITGS) and 622 to 643 (DPVD…GINP). Serine 575 carries the phosphoserine; by CDK1; in vitro modification. The residue at position 577 (threonine 577) is a Phosphothreonine. 2 positions are modified to phosphoserine; by PLK1; in vitro: serine 582 and serine 586. Positions 583-593 (DQNSRSSSQAS) are enriched in low complexity. Serine 675 carries the phosphoserine modification.

It belongs to the MISP family. As to quaternary structure, associates with F-actin. Interacts with DCTN1; this interaction regulates DCTN1 distribution at the cell cortex. Interacts with PTK2/FAK and MAPRE1. Phosphorylated by CDK1 and PLK1. CDK1 is the priming kinase for PLK1 phosphorylation. Phosphorylation by PLK1 is required for proper spindle orientation at metaphase.

The protein resides in the cell junction. Its subcellular location is the focal adhesion. It localises to the cytoplasm. The protein localises to the cytoskeleton. It is found in the cell cortex. Functionally, plays a role in mitotic spindle orientation and mitotic progression. Regulates the distribution of dynactin at the cell cortex in a PLK1-dependent manner, thus stabilizing cortical and astral microtubule attachments required for proper mitotic spindle positioning. May link microtubules to the actin cytospkeleton and focal adhesions. May be required for directed cell migration and centrosome orientation. May also be necessary for proper stacking of the Golgi apparatus. The chain is Mitotic interactor and substrate of PLK1 from Homo sapiens (Human).